The primary structure comprises 178 residues: ATP synthase subunit delta (178 aa).

The protein belongs to the ATPase delta chain family. As to quaternary structure, F-type ATPases have 2 components, F(1) - the catalytic core - and F(0) - the membrane proton channel. F(1) has five subunits: alpha(3), beta(3), gamma(1), delta(1), epsilon(1). F(0) has three main subunits: a(1), b(2) and c(10-14). The alpha and beta chains form an alternating ring which encloses part of the gamma chain. F(1) is attached to F(0) by a central stalk formed by the gamma and epsilon chains, while a peripheral stalk is formed by the delta and b chains.

The protein resides in the cell inner membrane. Its function is as follows. F(1)F(0) ATP synthase produces ATP from ADP in the presence of a proton or sodium gradient. F-type ATPases consist of two structural domains, F(1) containing the extramembraneous catalytic core and F(0) containing the membrane proton channel, linked together by a central stalk and a peripheral stalk. During catalysis, ATP synthesis in the catalytic domain of F(1) is coupled via a rotary mechanism of the central stalk subunits to proton translocation. In terms of biological role, this protein is part of the stalk that links CF(0) to CF(1). It either transmits conformational changes from CF(0) to CF(1) or is implicated in proton conduction. The chain is ATP synthase subunit delta from Marinomonas sp. (strain MWYL1).